The following is a 317-amino-acid chain: tRNA uridine(34) hydroxylase (317 aa).

Residues Glu123 to Glu217 form the Rhodanese domain. Catalysis depends on Cys177, which acts as the Cysteine persulfide intermediate.

It belongs to the TrhO family.

The catalysed reaction is uridine(34) in tRNA + AH2 + O2 = 5-hydroxyuridine(34) in tRNA + A + H2O. Catalyzes oxygen-dependent 5-hydroxyuridine (ho5U) modification at position 34 in tRNAs. This Staphylococcus carnosus (strain TM300) protein is tRNA uridine(34) hydroxylase.